Consider the following 386-residue polypeptide: Succinate--CoA ligase [ADP-forming] subunit beta (386 aa).

One can recognise an ATP-grasp domain in the interval 9 to 244; the sequence is KDILRQFGVP…LDEEDPAEVE (236 aa). ATP is bound by residues lysine 46, 53 to 55, glutamate 99, alanine 102, and glutamate 107; that span reads GRG. Positions 199 and 213 each coordinate Mg(2+). Residues asparagine 264 and 321–323 contribute to the substrate site; that span reads GIM.

The protein belongs to the succinate/malate CoA ligase beta subunit family. In terms of assembly, heterotetramer of two alpha and two beta subunits. Requires Mg(2+) as cofactor.

It catalyses the reaction succinate + ATP + CoA = succinyl-CoA + ADP + phosphate. The catalysed reaction is GTP + succinate + CoA = succinyl-CoA + GDP + phosphate. It functions in the pathway carbohydrate metabolism; tricarboxylic acid cycle; succinate from succinyl-CoA (ligase route): step 1/1. Functionally, succinyl-CoA synthetase functions in the citric acid cycle (TCA), coupling the hydrolysis of succinyl-CoA to the synthesis of either ATP or GTP and thus represents the only step of substrate-level phosphorylation in the TCA. The beta subunit provides nucleotide specificity of the enzyme and binds the substrate succinate, while the binding sites for coenzyme A and phosphate are found in the alpha subunit. This Delftia acidovorans (strain DSM 14801 / SPH-1) protein is Succinate--CoA ligase [ADP-forming] subunit beta.